The following is a 453-amino-acid chain: Glutamyl-tRNA(Gln) amidotransferase subunit A (453 aa).

Catalysis depends on charge relay system residues Lys-56 and Ser-131. The active-site Acyl-ester intermediate is the Ser-155.

This sequence belongs to the amidase family. GatA subfamily. In terms of assembly, heterotrimer of A, B and C subunits.

The enzyme catalyses L-glutamyl-tRNA(Gln) + L-glutamine + ATP + H2O = L-glutaminyl-tRNA(Gln) + L-glutamate + ADP + phosphate + H(+). Its function is as follows. Allows the formation of correctly charged Gln-tRNA(Gln) through the transamidation of misacylated Glu-tRNA(Gln) in organisms which lack glutaminyl-tRNA synthetase. The reaction takes place in the presence of glutamine and ATP through an activated gamma-phospho-Glu-tRNA(Gln). This chain is Glutamyl-tRNA(Gln) amidotransferase subunit A, found in Campylobacter jejuni (strain RM1221).